Here is a 302-residue protein sequence, read N- to C-terminus: Proteasome subunit beta (302 aa).

The propeptide at 1–50 (MTITGSRGFPDGYLAPGSSFLDFAAQHAPTIMPGTQPTFDTIPQDIAPHG) is removed in mature form; by autocatalysis. Thr-51 serves as the catalytic Nucleophile. The tract at residues 277 to 302 (EPGRDGPGNRLPSQGSATIIPESDQS) is disordered. Residues 287–302 (LPSQGSATIIPESDQS) are compositionally biased toward polar residues.

This sequence belongs to the peptidase T1B family. The 20S proteasome core is composed of 14 alpha and 14 beta subunits that assemble into four stacked heptameric rings, resulting in a barrel-shaped structure. The two inner rings, each composed of seven catalytic beta subunits, are sandwiched by two outer rings, each composed of seven alpha subunits. The catalytic chamber with the active sites is on the inside of the barrel. Has a gated structure, the ends of the cylinder being occluded by the N-termini of the alpha-subunits. Is capped by the proteasome-associated ATPase, ARC.

The protein localises to the cytoplasm. It catalyses the reaction Cleavage of peptide bonds with very broad specificity.. Its pathway is protein degradation; proteasomal Pup-dependent pathway. The formation of the proteasomal ATPase ARC-20S proteasome complex, likely via the docking of the C-termini of ARC into the intersubunit pockets in the alpha-rings, may trigger opening of the gate for substrate entry. Interconversion between the open-gate and close-gate conformations leads to a dynamic regulation of the 20S proteasome proteolysis activity. In terms of biological role, component of the proteasome core, a large protease complex with broad specificity involved in protein degradation. This chain is Proteasome subunit beta, found in Jonesia denitrificans (strain ATCC 14870 / DSM 20603 / BCRC 15368 / CIP 55.134 / JCM 11481 / NBRC 15587 / NCTC 10816 / Prevot 55134) (Listeria denitrificans).